We begin with the raw amino-acid sequence, 841 residues long: Neuronal tyrosine-phosphorylated phosphoinositide-3-kinase adapter 1 (841 aa).

Disordered stretches follow at residues 1-45 (MNLL…PGVR), 64-448 (PASQ…PAAL), 655-679 (RAWNGSAEGPGKVEREDRGPGTSGI), 745-769 (RPCSQPRDALSQPHPALPLPLPLPP), and 812-833 (LPSWRRGPEPRKSGTPPCRRQH). Residues 8–25 (TKLEWRQHKEEEAKRSSS) show a composition bias toward basic and acidic residues. Residues 26 to 39 (KEVAPAGSAGPAAG) show a composition bias toward low complexity. Residues 76–186 (SAMAPRSLSC…DESCPPGPSP (111 aa)) are involved in CYFIP1- and NCKAP1-binding. A compositionally biased stretch (gly residues) spans 94–103 (VGGGPGGASG). Residues 114-123 (PPAKPRRHPS) show a composition bias toward basic residues. Over residues 167 to 176 (SPNTQLSVSF) the composition is skewed to polar residues. The segment covering 224-243 (FRGGGRSGGGLAGPPLGGGG) has biased composition (gly residues). Residues 252–261 (SDSEESEAIY) show a composition bias toward acidic residues. Residues 279–295 (GPPPLTATSPPQQPHAL) show a composition bias toward pro residues. The span at 759–769 (PALPLPLPLPP) shows a compositional bias: pro residues.

Belongs to the NYAP family. Interacts with ACOT9, ARHGAP26 and PIK3R2. Interacts with components of the WAVE1 complex, CYFIP1 and NCKAP1; this interaction mediates PI3K-WAVE1 association and actin cytoskeleton remodeling. In terms of processing, phosphorylated on tyrosine residues by FYN upon stimulation with CNTN5.

Its function is as follows. Activates PI3K and concomitantly recruits the WAVE1 complex to the close vicinity of PI3K and regulates neuronal morphogenesis. This Homo sapiens (Human) protein is Neuronal tyrosine-phosphorylated phosphoinositide-3-kinase adapter 1 (NYAP1).